The chain runs to 126 residues: Histone H2B (126 aa).

Low complexity predominate over residues Met-1 to Lys-12. The disordered stretch occupies residues Met-1–Glu-36. N6-acetyllysine is present on residues Lys-6 and Lys-13. Residues Lys-13–Arg-34 are compositionally biased toward basic residues. Ser-15 carries the post-translational modification Phosphoserine. N6-acetyllysine is present on residues Lys-16 and Lys-21. Lys-121 is covalently cross-linked (Glycyl lysine isopeptide (Lys-Gly) (interchain with G-Cter in ubiquitin)).

Belongs to the histone H2B family. The nucleosome is a histone octamer containing two molecules each of H2A, H2B, H3 and H4 assembled in one H3-H4 heterotetramer and two H2A-H2B heterodimers. The octamer wraps approximately 147 bp of DNA. In terms of processing, monoubiquitination of Lys-121 by the RNF20/40 complex gives a specific tag for epigenetic transcriptional activation and is also prerequisite for histone H3 'Lys-4' and 'Lys-79' methylation. Post-translationally, phosphorylated on Ser-15 during apoptosis; which facilitates apoptotic chromatin condensation.

Its subcellular location is the nucleus. It is found in the chromosome. Functionally, core component of nucleosome. Nucleosomes wrap and compact DNA into chromatin, limiting DNA accessibility to the cellular machineries which require DNA as a template. Histones thereby play a central role in transcription regulation, DNA repair, DNA replication and chromosomal stability. DNA accessibility is regulated via a complex set of post-translational modifications of histones, also called histone code, and nucleosome remodeling. This chain is Histone H2B, found in Cairina moschata (Muscovy duck).